The following is a 1257-amino-acid chain: Neurocan core protein (1257 aa).

The signal sequence occupies residues 1-22 (MGAESVWASGLLVLWLLLLVSG). The 121-residue stretch at 37 to 157 (HMLKSGSGPI…EQDLVTLEVT (121 aa)) folds into the Ig-like V-type domain. Cystine bridges form between Cys-58–Cys-139, Cys-181–Cys-252, Cys-205–Cys-226, Cys-279–Cys-354, and Cys-303–Cys-324. A glycan (N-linked (GlcNAc...) asparagine) is linked at Asn-121. 2 consecutive Link domains span residues 159–254 (VVFH…YCFA) and 258–356 (GGEV…YCFR). Asn-339 is a glycosylation site (N-linked (GlcNAc...) asparagine). Residues 361–391 (TPQRGDSEIPSSGDEGEIVSAEGPPAPELKP) form a disordered region. Residues Ser-380 and Ser-410 are each glycosylated (O-linked (Xyl...) (chondroitin sulfate) serine). Residues 447–459 (SSTGVPSPSSLGV) are compositionally biased toward low complexity. Disordered stretches follow at residues 447–493 (SSTG…FQQQ), 550–610 (GSLG…AVPS), and 683–707 (GAEDPETPFQTTMAAPGEASHGSPE). The span at 464–473 (TTPSGTQVAP) shows a compositional bias: polar residues. Positions 569-580 (SPSTVPSTDSTP) are enriched in low complexity. N-linked (GlcNAc...) asparagine glycosylation occurs at Asn-737. O-linked (Xyl...) (chondroitin sulfate) serine glycosylation occurs at Ser-944. Residues 949-985 (PTDPCENNPCLHGGTCRTNGTMYGCSCDQGYAGENCE) form the EGF-like 1 domain. 11 cysteine pairs are disulfide-bonded: Cys-953–Cys-964, Cys-958–Cys-973, Cys-975–Cys-984, Cys-991–Cys-1002, Cys-996–Cys-1011, Cys-1013–Cys-1022, Cys-1029–Cys-1040, Cys-1057–Cys-1149, Cys-1125–Cys-1141, Cys-1156–Cys-1199, and Cys-1185–Cys-1212. An N-linked (GlcNAc...) asparagine glycan is attached at Asn-967. The region spanning 987–1023 (DIDDCLCSPCENGGTCIDEVNGFICLCLPSYGGNLCE) is the EGF-like 2; calcium-binding domain. Residues 1025-1154 (DTEGCDRGWH…LPYVCKKGTV (130 aa)) form the C-type lectin domain. Residues 1154–1214 (VLCGPPPAVE…WDRPQIVCTK (61 aa)) enclose the Sushi domain. An N-linked (GlcNAc...) asparagine glycan is attached at Asn-1164. Residues 1215 to 1244 (PRRSHRMRRHHHHPHRHHKPRKEHRKHKRH) show a composition bias toward basic residues. Residues 1215 to 1257 (PRRSHRMRRHHHHPHRHHKPRKEHRKHKRHPAEDWEKDEGDFC) form a disordered region.

Belongs to the aggrecan/versican proteoglycan family. Post-translationally, two isoforms were found that probably arise by proteolytic processing. The large isoform is predominant in early postnatal brain, the small isoform is found in adult brain. O-glycosylated; contains chondroitin sulfate. Early postnatal and adult brain; not expressed in kidney, lung, liver and muscle.

The protein resides in the secreted. Its function is as follows. May modulate neuronal adhesion and neurite growth during development by binding to neural cell adhesion molecules (NG-CAM and N-CAM). Chondroitin sulfate proteoglycan; binds to hyaluronic acid. This chain is Neurocan core protein (Ncan), found in Rattus norvegicus (Rat).